Consider the following 569-residue polypeptide: Urease subunit alpha (569 aa).

The region spanning Gly-131–Leu-569 is the Urease domain. Residues His-136, His-138, and Lys-219 each coordinate Ni(2+). Lys-219 carries the N6-carboxylysine modification. His-221 lines the substrate pocket. The Ni(2+) site is built by His-248 and His-274. The active-site Proton donor is His-322. A Ni(2+)-binding site is contributed by Asp-362.

Belongs to the metallo-dependent hydrolases superfamily. Urease alpha subunit family. Heterotrimer of UreA (gamma), UreB (beta) and UreC (alpha) subunits. Three heterotrimers associate to form the active enzyme. Ni cation serves as cofactor. Carboxylation allows a single lysine to coordinate two nickel ions.

The protein resides in the cytoplasm. The catalysed reaction is urea + 2 H2O + H(+) = hydrogencarbonate + 2 NH4(+). The protein operates within nitrogen metabolism; urea degradation; CO(2) and NH(3) from urea (urease route): step 1/1. The chain is Urease subunit alpha from Prochlorococcus marinus (strain MIT 9301).